The following is a 553-amino-acid chain: CDP-diacylglycerol--glycerol-3-phosphate 3-phosphatidyltransferase, mitochondrial (553 aa).

The transit peptide at 1 to 25 (MAAPAAGPVFWRRLLGLLPGRPGLA) directs the protein to the mitochondrion. The residue at position 46 (serine 46) is a Phosphoserine. Residue 121 to 128 (ASLYLGTG) participates in ATP binding. PLD phosphodiesterase domains are found at residues 212-238 (TIGLQHIKVYLFDNNVILSGANLSDSY) and 457-490 (RGWTFHAKGLWLYLAGSSLPCLTLIGSPNFGYRS). Active-site residues include histidine 217, lysine 219, and aspartate 224.

Belongs to the CDP-alcohol phosphatidyltransferase class-II family. Widely expressed with higher expression in testis, liver and brain.

The protein localises to the mitochondrion. The catalysed reaction is a CDP-1,2-diacyl-sn-glycerol + sn-glycerol 3-phosphate = a 1,2-diacyl-sn-glycero-3-phospho-(1'-sn-glycero-3'-phosphate) + CMP + H(+). It participates in phospholipid metabolism; phosphatidylglycerol biosynthesis; phosphatidylglycerol from CDP-diacylglycerol: step 1/2. Activated by calcium and magnesium and inhibited by other bivalent cations. In terms of biological role, functions in the biosynthesis of the anionic phospholipids phosphatidylglycerol and cardiolipin. The chain is CDP-diacylglycerol--glycerol-3-phosphate 3-phosphatidyltransferase, mitochondrial (Pgs1) from Mus musculus (Mouse).